The following is a 478-amino-acid chain: ATP synthase subunit beta (478 aa).

Residue 152-159 (GGAGVGKT) participates in ATP binding.

This sequence belongs to the ATPase alpha/beta chains family. In terms of assembly, F-type ATPases have 2 components, CF(1) - the catalytic core - and CF(0) - the membrane proton channel. CF(1) has five subunits: alpha(3), beta(3), gamma(1), delta(1), epsilon(1). CF(0) has three main subunits: a(1), b(2) and c(9-12). The alpha and beta chains form an alternating ring which encloses part of the gamma chain. CF(1) is attached to CF(0) by a central stalk formed by the gamma and epsilon chains, while a peripheral stalk is formed by the delta and b chains.

Its subcellular location is the cell membrane. The enzyme catalyses ATP + H2O + 4 H(+)(in) = ADP + phosphate + 5 H(+)(out). Produces ATP from ADP in the presence of a proton gradient across the membrane. The catalytic sites are hosted primarily by the beta subunits. This chain is ATP synthase subunit beta, found in Wolbachia pipientis subsp. Culex pipiens (strain wPip).